The chain runs to 367 residues: Auxin efflux carrier component 8 (367 aa).

Topologically, residues 1-6 (MISWLD) are extracellular. Residues 7–27 (IYHVVSATVPLYVSMTLGFLS) traverse the membrane as a helical segment. Topologically, residues 28–38 (ARHLKLFSPEQ) are cytoplasmic. Residues 39-59 (CAGINKFVAKFSIPLLSFQII) traverse the membrane as a helical segment. Ile-51 contributes to the (indol-3-yl)acetate binding site. The Extracellular segment spans residues 60–69 (SENNPFKMSP). The chain crosses the membrane as a helical span at residues 70–90 (KLILSDILQKFLVVVVLAMVL). Topologically, residues 91 to 105 (RFWHPTGGRGGKLGW) are cytoplasmic. A helical membrane pass occupies residues 106 to 126 (VITGLSISVLPNTLILGMPIL). Asn-117 and Leu-119 together coordinate (indol-3-yl)acetate. Residues 127–136 (SAIYGDEAAS) are Extracellular-facing. A helical transmembrane segment spans residues 137 to 157 (ILEQIVVLQSLIWYTILLFLF). Position 150 (Tyr-150) interacts with (indol-3-yl)acetate. At 158–227 (ELNAARALPS…LIINPNTYAT (70 aa)) the chain is on the cytoplasmic side. The segment at 168 to 194 (SGASLEHTGNDQEEANIEDEPKEEEDE) is disordered. Over residues 178–194 (DQEEANIEDEPKEEEDE) the composition is skewed to acidic residues. A helical membrane pass occupies residues 228–248 (LIGIIWATLHFRLGWNLPEMI). The Extracellular portion of the chain corresponds to 249-251 (DKS). The helical transmembrane segment at 252–272 (IHLLSDGGLGMAMFSLGLFMA) threads the bilayer. Residues 273–288 (SQSSIIACGTKMAIIT) are Cytoplasmic-facing. A helical transmembrane segment spans residues 289–309 (MLLKFVLGPALMIASAYCIRL). The Extracellular portion of the chain corresponds to 310-312 (KST). Residues 313-333 (LFKVAILQAALPQGVVPFVFA) traverse the membrane as a helical segment. Val-327 and Val-328 together coordinate (indol-3-yl)acetate. Residues 334 to 344 (KEYNLHPEIIS) are Cytoplasmic-facing. Residues 345-365 (TGVIFGMLIALPTTLAYYFLL) traverse the membrane as a helical segment. The Extracellular segment spans residues 366–367 (DL).

Belongs to the auxin efflux carrier (TC 2.A.69.1) family. Homodimer. Expressed in veins of mature leaves. Strongly expressed in pollen.

The protein resides in the endoplasmic reticulum membrane. The protein localises to the cell membrane. Auxin efflux carrier activity is competitively inhibited by naptalamate (N-1-naphthylphthalamic acid, NPA). Acts as a component of the auxin efflux carrier. Component of the intracellular auxin-transport pathway in the male gametophyte. Involved in the regulation of auxin homeostasis in pollen. Involved in the efflux of auxin from the endoplasmic reticulum into the cytoplasm. Binds auxins including indole-3-acetic acid (IAA), naphthaleneacetic acid (NAA) and the herbicide 2,4-dichlorophenoxyacetic acid (2,4-D), but barely indole-3-butyric acid (IBA) and 2-phenylacetic acid (PAA). PIN5 and PIN8 may have an antagonistic/compensatory activity. Involved in the control of vein patterning. Redundantly with PIN6, inhibits the vein-formation-promoting functions of PIN5. PIN5, PIN6, and PIN8 control vein network geometry, but they are expressed in mutually exclusive domains of leaf vascular cells. The sequence is that of Auxin efflux carrier component 8 from Arabidopsis thaliana (Mouse-ear cress).